The primary structure comprises 343 residues: NADH-cytochrome b5 reductase 2 (343 aa).

The chain crosses the membrane as a helical span at residues 41–61 (ILLGAAAVGLAGAGAYFFSGA). One can recognise an FAD-binding FR-type domain in the interval 92-197 (QGWLSLKLEE…KGPLPKYPWE (106 aa)). 200-235 (KHKHIALVAGGTGITPMYQLIRAIFNNPDDKTKVTL) lines the FAD pocket.

This sequence belongs to the flavoprotein pyridine nucleotide cytochrome reductase family. FAD is required as a cofactor.

Its subcellular location is the mitochondrion outer membrane. It carries out the reaction 2 Fe(III)-[cytochrome b5] + NADH = 2 Fe(II)-[cytochrome b5] + NAD(+) + H(+). May mediate the reduction of outer membrane cytochrome b5. In Neurospora crassa (strain ATCC 24698 / 74-OR23-1A / CBS 708.71 / DSM 1257 / FGSC 987), this protein is NADH-cytochrome b5 reductase 2 (mcr-1).